The primary structure comprises 205 residues: N-(5'-phosphoribosyl)anthranilate isomerase (205 aa).

Belongs to the TrpF family.

The enzyme catalyses N-(5-phospho-beta-D-ribosyl)anthranilate = 1-(2-carboxyphenylamino)-1-deoxy-D-ribulose 5-phosphate. It functions in the pathway amino-acid biosynthesis; L-tryptophan biosynthesis; L-tryptophan from chorismate: step 3/5. In Thermotoga neapolitana (strain ATCC 49049 / DSM 4359 / NBRC 107923 / NS-E), this protein is N-(5'-phosphoribosyl)anthranilate isomerase.